The chain runs to 609 residues: Nuclear factor 7, brain (609 aa).

Residues 21–75 form the Tudor-knot domain; it reads NVGSTYPCKRSDGSQHDAEIVKVRYNKQAGREEYYAHYVGLNRRQNEWVDKSRLV. A compositionally biased stretch (basic and acidic residues) spans 74–84; the sequence is LVLTKPPKEGE. The disordered stretch occupies residues 74–129; the sequence is LVLTKPPKEGETNGTDQEVTDTAEQPDSKTPQKRKIEEPEPEPKKAKVEEKDASKN. A compositionally biased stretch (polar residues) spans 85 to 102; sequence TNGTDQEVTDTAEQPDSK. Position 103 is a phosphothreonine; by CDK1 (Thr103). Positions 107–127 are enriched in basic and acidic residues; the sequence is RKIEEPEPEPKKAKVEEKDAS. Residues 145–185 form an RING-type zinc finger; that stretch reads CPLCVELFKDPVMVACGHNFCRSCIDKAWEGQSSFACPECR. Residues 219-260 form a B box-type zinc finger; sequence RPLEKCSEHDERLKLYCKDDGTLSCVICRDSLKHASHNFLPI. 4 residues coordinate Zn(2+): Cys224, His227, Cys246, and His252. Residues 278–371 adopt a coiled-coil conformation; that stretch reads LEASLKVTEQ…SLAKERMEDT (94 aa). The B30.2/SPRY domain maps to 413–609; the sequence is GPIQYIMWKE…VDPLRFVHNK (197 aa).

As to quaternary structure, monomer. Threonine (predominantly) and serine residues are phosphorylated during oocyte maturation, when CDK1 is active. As to expression, at the neurula stage, high expression in dorsal embryo region including neural folds and somites. Also high expression in adult brain (CNS) and low expression in oocytes.

It localises to the nucleus. Its function is as follows. Transcription factor that determines dorsal-ventral body axis. This chain is Nuclear factor 7, brain, found in Xenopus laevis (African clawed frog).